Consider the following 610-residue polypeptide: Terminase, large subunit (610 aa).

The tract at residues 30-94 is ssDNA-binding; that stretch reads RKDEDGIHWI…SRYMGLPNLK (65 aa). The segment at 131–301 is ATPase activity; the sequence is DYGVIKVQLR…NHFYDIWTAA (171 aa). ATP-binding residues include Q138 and Q143. The Walker A motif signature appears at 161 to 167; the sequence is SRQLGKT. ATP is bound at residue R202. Residues 251–256 carry the Walker B motif motif; that stretch reads MIYIDE. Residue E256 is the For ATPase activity of the active site. An ATPase coupling motif is present at residues 285–287; sequence TTT. The segment at 328 to 352 is binding to the portal protein; that stretch reads IFDDGWQWSIQTINGSSLAQFRQEH. The nuclease activity stretch occupies residues 360-559; the sequence is SGTLISGMKL…FGWLSTQSKF (200 aa). The Mg(2+) site is built by D401, E458, and D542.

Belongs to the Tequatrovirus large terminase family. As to quaternary structure, interacts with the terminase small subunit; the active complex is composed of a pentamer of terminase large subunits and a dodecamer of terminase small subunits. Interacts with the portal protein. Interacts with the RNA polymerase sigma factor gp55. The cofactor is Mg(2+). Phosphorylated.

Stimulated up to 50 to 100-fold by the terminase small subunit. Modestly activated by portal protein and single-stranded binding protein gp32 multimers. Functionally, the terminase large subunit acts as an ATP driven molecular motor necessary for viral DNA translocation into empty capsids and as an endonuclease that cuts the viral genome to initiate and to end a packaging reaction. The terminase lies at a unique vertex of the procapsid and is composed of two subunits, a small terminase subunit involved in viral DNA recognition (packaging sequence), and a large terminase subunit possessing endonucleolytic and ATPase activities. Both terminase subunits heterooligomerize and are docked on the portal protein to form the packaging machine. The terminase large subunit exhibits endonuclease activity and cleaves the viral genome concatemer once the capsid is full (headful packaging). Once the capsid is packaged with the DNA, the terminase complex is substituted by the tail. The protein is Terminase, large subunit (17) of Escherichia coli (Bacteriophage T4).